A 165-amino-acid chain; its full sequence is Basic transcription factor 3 (165 aa).

Residues 33–97 form the NAC-A/B domain; sequence TTDDKRLQST…PQTKKLQDIL (65 aa). Over residues 120-134 the composition is skewed to polar residues; sequence QKQASGEGNAASATI. Residues 120–144 are disordered; the sequence is QKQASGEGNAASATIQEEDDDDVPE.

The protein belongs to the NAC-beta family. Part of the nascent polypeptide-associated complex (NAC). Interacts with EIF(ISO)4E.

This chain is Basic transcription factor 3, found in Arabidopsis thaliana (Mouse-ear cress).